A 58-amino-acid chain; its full sequence is uncharacterized protein (58 aa).

This is an uncharacterized protein from Methanocaldococcus jannaschii (strain ATCC 43067 / DSM 2661 / JAL-1 / JCM 10045 / NBRC 100440) (Methanococcus jannaschii).